We begin with the raw amino-acid sequence, 460 residues long: UDP-N-acetylmuramate--L-alanine ligase (460 aa).

Residue 118–124 coordinates ATP; it reads GAHGKTT.

The protein belongs to the MurCDEF family.

Its subcellular location is the cytoplasm. It carries out the reaction UDP-N-acetyl-alpha-D-muramate + L-alanine + ATP = UDP-N-acetyl-alpha-D-muramoyl-L-alanine + ADP + phosphate + H(+). It functions in the pathway cell wall biogenesis; peptidoglycan biosynthesis. Functionally, cell wall formation. The protein is UDP-N-acetylmuramate--L-alanine ligase of Clostridium botulinum (strain Eklund 17B / Type B).